A 204-amino-acid polypeptide reads, in one-letter code: Probable dTDP-4-oxo-2,6-dideoxy-D-glucose 3,5-epimerase (204 aa).

Residues Arg21, Glu26, 45–47, Lys70, and His117 contribute to the substrate site; that span reads QAN. Tyr130 functions as the Proton donor in the catalytic mechanism. Glu141 contacts substrate. A disordered region spans residues 164–204; it reads VGEGTPTHRPWRRPRRPGILPDYEGVPGALHRGGGRRGTGP.

It belongs to the dTDP-4-dehydrorhamnose 3,5-epimerase family.

The protein operates within antibiotic biosynthesis. In terms of biological role, involved in the biosynthesis of one of the two 2,6-deoxysugars, dTDP-L-oleandrose, attached to the macrolactone ring oleandolide to produce the aglycone antibiotic oleandomycin. Probably catalyzes the conversion of dTDP-4-keto-2,6-dideoxy-alpha-D-glucose to dTDP-4-keto-2,6-dideoxy-beta-L-galactose. This chain is Probable dTDP-4-oxo-2,6-dideoxy-D-glucose 3,5-epimerase, found in Streptomyces antibioticus.